A 481-amino-acid polypeptide reads, in one-letter code: Proline--tRNA ligase (481 aa).

It belongs to the class-II aminoacyl-tRNA synthetase family. ProS type 3 subfamily. As to quaternary structure, homodimer.

It localises to the cytoplasm. The enzyme catalyses tRNA(Pro) + L-proline + ATP = L-prolyl-tRNA(Pro) + AMP + diphosphate. Its function is as follows. Catalyzes the attachment of proline to tRNA(Pro) in a two-step reaction: proline is first activated by ATP to form Pro-AMP and then transferred to the acceptor end of tRNA(Pro). In Chlorobaculum tepidum (strain ATCC 49652 / DSM 12025 / NBRC 103806 / TLS) (Chlorobium tepidum), this protein is Proline--tRNA ligase.